The primary structure comprises 302 residues: Geranylgeranyl diphosphate synthase (302 aa).

Isopentenyl diphosphate contacts are provided by Lys-53, Arg-56, and His-87. Residues Asp-94 and Asp-100 each coordinate Mg(2+). Residue Arg-105 coordinates (2E,6E)-farnesyl diphosphate. Residue Arg-106 participates in isopentenyl diphosphate binding. Positions 189, 190, and 227 each coordinate (2E,6E)-farnesyl diphosphate.

This sequence belongs to the FPP/GGPP synthase family. The cofactor is Mg(2+).

The enzyme catalyses isopentenyl diphosphate + (2E,6E)-farnesyl diphosphate = (2E,6E,10E)-geranylgeranyl diphosphate + diphosphate. It functions in the pathway isoprenoid biosynthesis; geranylgeranyl diphosphate biosynthesis; geranylgeranyl diphosphate from farnesyl diphosphate and isopentenyl diphosphate: step 1/1. Functionally, catalyzes the condensation of farnesyl diphosphate (FPP) and isopentenyl diphosphate (IPP) to yield geranylgeranyl diphosphate (GGPP) needed for biosynthesis of carotenoids and diterpenes. The polypeptide is Geranylgeranyl diphosphate synthase (crtE) (Pantoea ananas (Erwinia uredovora)).